Consider the following 359-residue polypeptide: Probable dual-specificity RNA methyltransferase RlmN (359 aa).

Glu91 serves as the catalytic Proton acceptor. Residues Gln97–Asp335 enclose the Radical SAM core domain. Cysteines 104 and 340 form a disulfide. 3 residues coordinate [4Fe-4S] cluster: Cys111, Cys115, and Cys118. S-adenosyl-L-methionine contacts are provided by residues Gly163 to Glu164, Ser195, Ser218 to His220, and Asn296. Catalysis depends on Cys340, which acts as the S-methylcysteine intermediate.

The protein belongs to the radical SAM superfamily. RlmN family. [4Fe-4S] cluster is required as a cofactor.

It is found in the cytoplasm. It carries out the reaction adenosine(2503) in 23S rRNA + 2 reduced [2Fe-2S]-[ferredoxin] + 2 S-adenosyl-L-methionine = 2-methyladenosine(2503) in 23S rRNA + 5'-deoxyadenosine + L-methionine + 2 oxidized [2Fe-2S]-[ferredoxin] + S-adenosyl-L-homocysteine. The catalysed reaction is adenosine(37) in tRNA + 2 reduced [2Fe-2S]-[ferredoxin] + 2 S-adenosyl-L-methionine = 2-methyladenosine(37) in tRNA + 5'-deoxyadenosine + L-methionine + 2 oxidized [2Fe-2S]-[ferredoxin] + S-adenosyl-L-homocysteine. Its function is as follows. Specifically methylates position 2 of adenine 2503 in 23S rRNA and position 2 of adenine 37 in tRNAs. This Streptococcus pyogenes serotype M12 (strain MGAS2096) protein is Probable dual-specificity RNA methyltransferase RlmN.